A 369-amino-acid chain; its full sequence is uncharacterized protein (369 aa).

Transmembrane regions (helical) follow at residues 25 to 45, 47 to 67, 119 to 139, 152 to 172, 206 to 226, 235 to 255, 268 to 288, 295 to 315, and 323 to 343; these read QWVI…TVHW, FGLL…LMPE, LNIV…FGVM, ITGF…FSAL, GALH…LFAI, LQAV…TLHL, LLFT…LPLI, LVGF…TTVF, and WVFY…GTVF.

To B.subtilis ComEC.

It is found in the cell membrane. This is an uncharacterized protein from Mycoplasma pneumoniae (strain ATCC 29342 / M129 / Subtype 1) (Mycoplasmoides pneumoniae).